A 527-amino-acid polypeptide reads, in one-letter code: T-complex protein 1 subunit beta (527 aa).

The protein belongs to the TCP-1 chaperonin family. Heterooligomeric complex of about 850 to 900 kDa that forms two stacked rings, 12 to 16 nm in diameter.

Its subcellular location is the cytoplasm. Molecular chaperone; assists the folding of proteins upon ATP hydrolysis. Known to play a role, in vitro, in the folding of actin and tubulin. The chain is T-complex protein 1 subunit beta from Arabidopsis thaliana (Mouse-ear cress).